Reading from the N-terminus, the 400-residue chain is Protein phosphatase methylesterase 1 (400 aa).

The interval 32-70 is disordered; that stretch reads DENDGDALGSLPSFNGQSNRNRKYTGKTGSTTDRISSKE. In terms of domain architecture, AB hydrolase-1 spans 114–365; the sequence is PIFIFHHGAG…DSGHFIQEDS (252 aa). Catalysis depends on residues serine 205, aspartate 233, and histidine 359.

It belongs to the AB hydrolase superfamily. Interacts with and inactivates the phosphatase PP2A-like catalytic subunits PPG1, PPH21, PPH22, PPH3 and SIT4.

The enzyme catalyses [phosphatase 2A protein]-C-terminal L-leucine methyl ester + H2O = [phosphatase 2A protein]-C-terminal L-leucine + methanol + H(+). Demethylates proteins that have been reversibly carboxymethylated. Demethylates the phosphatase PP2A catalytic subunits PPH21 and PPH22. Forms inactive complexes (PP2Ai) with phosphatase PP2A-like catalytic subunits. Involved in the regulation of cell cycle progression at START. In Saccharomyces cerevisiae (strain ATCC 204508 / S288c) (Baker's yeast), this protein is Protein phosphatase methylesterase 1 (PPE1).